Reading from the N-terminus, the 556-residue chain is Protein F37C4.5 (556 aa).

Alanine 2 bears the N-acetylalanine mark.

In Caenorhabditis elegans, this protein is Protein F37C4.5.